The primary structure comprises 738 residues: NADH dehydrogenase [ubiquinone] iron-sulfur protein 1, mitochondrial (738 aa).

The N-terminal 27 residues, 1-27 (MGLGLLASRALRSSRIIRNSTRTIVST), are a transit peptide targeting the mitochondrion. The 79-residue stretch at 66 to 144 (DVIEVFVDGY…GMKIKTDTPI (79 aa)) folds into the 2Fe-2S ferredoxin-type domain. [2Fe-2S] cluster contacts are provided by C100, C111, C114, and C128. In terms of domain architecture, 4Fe-4S His(Cys)3-ligated-type spans 144–183 (IAKKAREGVMEFLLMNHPLDCPICDQGGECDLQDQSMAFG). [4Fe-4S] cluster-binding residues include H160, C164, C167, C173, C212, C215, C218, and C262. Residues 281–337 (LKGTESIDVTDAVGSNIRIDSRGPEVMRVVPRLNEDINEEWISDKTRFFYDGLKRQR) form the 4Fe-4S Mo/W bis-MGD-type domain.

The protein belongs to the complex I 75 kDa subunit family. In terms of assembly, complex I is composed of about 45 different subunits. This is a component of the iron-sulfur (IP) fragment of the enzyme. It depends on [2Fe-2S] cluster as a cofactor. [4Fe-4S] cluster is required as a cofactor.

It localises to the mitochondrion inner membrane. The enzyme catalyses a ubiquinone + NADH + 5 H(+)(in) = a ubiquinol + NAD(+) + 4 H(+)(out). Functionally, core subunit of the mitochondrial membrane respiratory chain NADH dehydrogenase (Complex I) that is believed to belong to the minimal assembly required for catalysis. Complex I functions in the transfer of electrons from NADH to the respiratory chain. The immediate electron acceptor for the enzyme is believed to be ubiquinone. This is the largest subunit of complex I and it is a component of the iron-sulfur (IP) fragment of the enzyme. It may form part of the active site crevice where NADH is oxidized. This is NADH dehydrogenase [ubiquinone] iron-sulfur protein 1, mitochondrial from Solanum tuberosum (Potato).